We begin with the raw amino-acid sequence, 99 residues long: A-type ATP synthase subunit F (99 aa).

Belongs to the V-ATPase F subunit family. As to quaternary structure, has multiple subunits with at least A(3), B(3), C, D, E, F, H, I and proteolipid K(x).

It is found in the cell membrane. Functionally, component of the A-type ATP synthase that produces ATP from ADP in the presence of a proton gradient across the membrane. The protein is A-type ATP synthase subunit F of Methanococcus aeolicus (strain ATCC BAA-1280 / DSM 17508 / OCM 812 / Nankai-3).